The primary structure comprises 61 residues: N-acetyl-D-glucosamine kinase (61 aa).

Tyr30 is modified (phosphotyrosine). Ser45 contacts ATP.

Belongs to the eukaryotic-type N-acetylglucosamine kinase family. In terms of assembly, homodimer.

It carries out the reaction N-acetyl-D-glucosamine + ATP = N-acetyl-D-glucosamine 6-phosphate + ADP + H(+). It catalyses the reaction aldehydo-N-acetyl-D-mannosamine + ATP = aldehydo-N-acetyl-D-mannosamine 6-phosphate + ADP + H(+). The enzyme catalyses N-acetyl-D-muramoyl-L-alanyl-D-isoglutamine + ATP = 6-O-phospho-N-acetyl-D-muramoyl-L-alanyl-D-isoglutamine + ADP + H(+). The protein operates within amino-sugar metabolism; N-acetylneuraminate degradation. Its function is as follows. Converts endogenous N-acetylglucosamine (GlcNAc), a major component of complex carbohydrates, from lysosomal degradation or nutritional sources into GlcNAc 6-phosphate. Also has N-acetylmannosamine (ManNAc) kinase activity. Involved in the N-glycolylneuraminic acid (Neu5Gc) degradation pathway. Also involved in innate immunity by promoting detection of bacterial peptidoglycan by NOD2: acts by catalyzing phosphorylation of muramyl dipeptide (MDP), a fragment of bacterial peptidoglycan, to generate 6-O-phospho-muramyl dipeptide, which acts as a direct ligand for NOD2. The polypeptide is N-acetyl-D-glucosamine kinase (Mesocricetus auratus (Golden hamster)).